A 259-amino-acid chain; its full sequence is NH(3)-dependent NAD(+) synthetase (259 aa).

Residue 33-40 (GLSGGIDS) participates in ATP binding. Residue Asp39 coordinates Mg(2+). Arg119 provides a ligand contact to deamido-NAD(+). Thr139 lines the ATP pocket. Glu144 serves as a coordination point for Mg(2+). Lys152 and Asp159 together coordinate deamido-NAD(+). 2 residues coordinate ATP: Lys168 and Ser190. A deamido-NAD(+)-binding site is contributed by 249 to 250 (HK).

The protein belongs to the NAD synthetase family. Homodimer.

It catalyses the reaction deamido-NAD(+) + NH4(+) + ATP = AMP + diphosphate + NAD(+) + H(+). It functions in the pathway cofactor biosynthesis; NAD(+) biosynthesis; NAD(+) from deamido-NAD(+) (ammonia route): step 1/1. Its function is as follows. Catalyzes the ATP-dependent amidation of deamido-NAD to form NAD. Uses ammonia as a nitrogen source. The protein is NH(3)-dependent NAD(+) synthetase of Methanocaldococcus jannaschii (strain ATCC 43067 / DSM 2661 / JAL-1 / JCM 10045 / NBRC 100440) (Methanococcus jannaschii).